We begin with the raw amino-acid sequence, 85 residues long: Platelet factor 4 (85 aa).

Disulfide bonds link C25–C51 and C27–C67. S41 is modified (phosphoserine). Residue 76–82 (KKIIKRL) coordinates heparin.

Belongs to the intercrine alpha (chemokine CxC) family. As to quaternary structure, homotetramer. Interacts with TNFAIP6 (via Link domain). Interacts with CCR1. Interacts with CXCR3. Interacts with THBD; this interaction enhances generation of activated protein C.

The protein resides in the secreted. Functionally, chemokine released during platelet aggregation that plays a role in different biological processes including hematopoiesis, cell proliferation, differentiation, and activation. Acts via different functional receptors including CCR1, CXCR3A or CXCR3B. Upon interaction with CXCR3A receptor, induces activated T-lymphocytes migration mediated via downstream Ras/extracellular signal-regulated kinase (ERK) signaling. Neutralizes the anticoagulant effect of heparin by binding more strongly to heparin than to the chondroitin-4-sulfate chains of the carrier molecule. Plays a role in the inhibition of hematopoiesis and in the maintenance of hematopoietic stem cell (HSC) quiescence. Chemotactic for neutrophils and monocytes via CCR1. Inhibits endothelial cell proliferation. In cooperation with toll-like receptor 8/TLR8, induces chromatin remodeling and activates inflammatory gene expression via the TBK1-IRF5 axis. In addition, induces myofibroblast differentiation and collagen synthesis in different precursor cells, including endothelial cells, by stimulating endothelial-to-mesenchymal transition. Interacts with thrombomodulin/THBD to enhance the activation of protein C and thus potentiates its anticoagulant activity. This is Platelet factor 4 (PF4) from Ovis aries (Sheep).